A 334-amino-acid chain; its full sequence is MAAAASPAFLLRLPLLLLLSSWCRTGLADPHSLCYDITVIPKFRPGPRWCAVQGQVDEKTFLHYDCGSKTVTPVSPLGKKLNVTTAWKAQNPVLREVVDILTEQLLDIQLENYIPKEPLTLQARMSCEQKAEGHGSGSWQLSFDGQIFLLFDSENRMWTTVHPGARKMKEKWENDKDMTMSFHYISMGDCTGWLEDFLMGMDSTLEPSAGAPPTMSSGTAQPRATATTLILCCLLIMCLLICSRHSLTQSHGHHPQSLQPPPHPPLLHPTWLLRRVLWSDSYQIAKRPLSGGHVTRVTLPIIGDDSHSLPCPLALYTINNGAARYSEPLQVSIS.

The N-terminal stretch at 1 to 25 is a signal peptide; that stretch reads MAAAASPAFLLRLPLLLLLSSWCRT. Over 26–223 the chain is Extracellular; sequence GLADPHSLCY…TMSSGTAQPR (198 aa). The interval 29–117 is MHC class I alpha-1 like; that stretch reads DPHSLCYDIT…IQLENYIPKE (89 aa). A disulfide bridge links C50 with C66. An N-linked (GlcNAc...) asparagine glycan is attached at N82. Residues 118–210 form an MHC class I alpha-2 like region; it reads PLTLQARMSC…MDSTLEPSAG (93 aa). A disulfide bridge connects residues C127 and C190. A lipid anchor (GPI-anchor amidated glycine) is attached at G218. A propeptide spans 219–334 (removed in mature form); sequence TAQPRATATT…YSEPLQVSIS (116 aa). A helical transmembrane segment spans residues 224-243; that stretch reads ATATTLILCCLLIMCLLICS. The Cytoplasmic portion of the chain corresponds to 244–334; sequence RHSLTQSHGH…YSEPLQVSIS (91 aa).

Belongs to the MHC class I family. In terms of assembly, interacts with KLRK1/NKG2D. (Microbial infection) In CMV-infected cells, interacts with the viral glycoprotein UL16; this interaction causes RAET1G retention in the endoplasmic reticulum and cis-Golgi and prevents binding to and activation of KLRK1/NKG2D, providing CMV with an immune evasion mechanism. The functional form is cleaved C-terminally of the GPI-anchor and yields a 28 kDa protein. Isoform 1 is highly expressed in colon and in a number of tumor cell lines and highly restricted in normal tissues. Both isoforms are frequently expressed in cell lines derived from epithelial cancers, and in primary breast cancers.

It localises to the cell membrane. The protein resides in the endoplasmic reticulum. The protein localises to the secreted. In terms of biological role, binds and activates the KLRK1/NKG2D receptor, mediating natural killer cell cytotoxicity. Functionally, down-regulates the expression of KLRK1 and stimulates natural killer cells to secrete IFNG. Stimulates natural killer cells to secrete IFNG. The chain is UL-16 binding protein 5 from Homo sapiens (Human).